A 55-amino-acid chain; its full sequence is ATP synthase protein 8 (55 aa).

Residues 6–26 (PHPWFAILVFSWIFFLVILPK) form a helical membrane-spanning segment.

This sequence belongs to the ATPase protein 8 family. As to quaternary structure, F-type ATPases have 2 components, CF(1) - the catalytic core - and CF(0) - the membrane proton channel.

It is found in the mitochondrion membrane. Functionally, mitochondrial membrane ATP synthase (F(1)F(0) ATP synthase or Complex V) produces ATP from ADP in the presence of a proton gradient across the membrane which is generated by electron transport complexes of the respiratory chain. F-type ATPases consist of two structural domains, F(1) - containing the extramembraneous catalytic core and F(0) - containing the membrane proton channel, linked together by a central stalk and a peripheral stalk. During catalysis, ATP synthesis in the catalytic domain of F(1) is coupled via a rotary mechanism of the central stalk subunits to proton translocation. Part of the complex F(0) domain. Minor subunit located with subunit a in the membrane. This Squalus acanthias (Spiny dogfish) protein is ATP synthase protein 8 (MT-ATP8).